The chain runs to 530 residues: Growth-regulating factor 1 (530 aa).

A disordered region spans residues 1 to 41 (MDLGVRVSGHETVSSPGQTELGSGFSNKQERSGFDGEDCWR). A compositionally biased stretch (polar residues) spans 11 to 27 (ETVSSPGQTELGSGFSN). Positions 28–41 (KQERSGFDGEDCWR) are enriched in basic and acidic residues. The 36-residue stretch at 133–168 (PFSLTQWAELEQQALIYKYITANVPVPSSLLLSLKK) folds into the QLQ domain. The WRC domain maps to 196–240 (DPEPGRCRRTDGKKWRCSRDAVPDQKYCERHINRGRHRSRKPVEG). 2 consecutive short sequence motifs (bipartite nuclear localization signal) follow at residues 201–211 (RCRRTDGKKWR) and 229–236 (RGRHRSRK). Disordered stretches follow at residues 223–250 (CERH…NAAA) and 485–530 (STFG…APSL). Over residues 485 to 508 (STFGSLSNSSSASSTIIGDNNNKN) the composition is skewed to low complexity. Over residues 519–530 (TLMNTSATAPSL) the composition is skewed to polar residues.

The protein belongs to the GRF family. As to quaternary structure, interacts with GIF1 and GIF2. Strongly expressed in actively growing and developing tissues, such as roots, upper stems, and shoot tips containing the shoot apical meristem (SAM) and flower buds. Also expressed in mature flowers, but weakly expressed in mature stems and leaves.

Its subcellular location is the nucleus. Transcription activator that plays a role in the regulation of cell expansion in leaf and cotyledons tissues. Component of a network formed by miR396, the GRFs and their interacting factors (GIFs) acting in the regulation of meristem function, at least partially through the control of cell proliferation. microRNA396-GRF1/GRF3 regulatory module acts as a developmental regulator in the reprogramming of root cells during cyst nematode infection, leading to the formation of the syncytium. The protein is Growth-regulating factor 1 (GRF1) of Arabidopsis thaliana (Mouse-ear cress).